Consider the following 476-residue polypeptide: Cysteine--tRNA ligase (476 aa).

Cysteine 29 provides a ligand contact to Zn(2+). The 'HIGH' region motif lies at 31–41 (PTVYDYTHLGH). Residues cysteine 209, histidine 234, and glutamate 238 each coordinate Zn(2+). The 'KMSKS' region motif lies at 266–270 (KMSKS). Position 269 (lysine 269) interacts with ATP.

The protein belongs to the class-I aminoacyl-tRNA synthetase family. The cofactor is Zn(2+).

The protein resides in the cytoplasm. The catalysed reaction is tRNA(Cys) + L-cysteine + ATP = L-cysteinyl-tRNA(Cys) + AMP + diphosphate. The chain is Cysteine--tRNA ligase from Thermococcus onnurineus (strain NA1).